The primary structure comprises 247 residues: MNESTVYECLKYGNENINRALEVLRAGKMIQIYDSDSREGETDLVIPAKAVTYKDVKWMRKDAGGLICVAVDPVASKQLKLPFMADLVREASRTSESLGEVVEKDGDLKYDSHSSFSIWVNHRDTRTGIPDLERALTIRKIGEITEKSLSGNGIRFGNEFRTPGHVALLRAAEGLLDERMGQTELSVALARMAGITPAMVVCEMLDDESGRALSKENSKDYGKDHGLVFLEGQEILEAYMLWTGSEC.

Residues 38–39, Asp-43, 179–183, and Glu-203 contribute to the D-ribulose 5-phosphate site; these read RE and RMGQT. Glu-39 serves as a coordination point for Mg(2+).

The protein belongs to the DHBP synthase family. As to quaternary structure, homodimer. It depends on Mg(2+) as a cofactor. Mn(2+) is required as a cofactor.

It carries out the reaction D-ribulose 5-phosphate = (2S)-2-hydroxy-3-oxobutyl phosphate + formate + H(+). Its pathway is cofactor biosynthesis; riboflavin biosynthesis; 2-hydroxy-3-oxobutyl phosphate from D-ribulose 5-phosphate: step 1/1. Functionally, catalyzes the conversion of D-ribulose 5-phosphate to formate and 3,4-dihydroxy-2-butanone 4-phosphate. The protein is 3,4-dihydroxy-2-butanone 4-phosphate synthase of Methanosarcina acetivorans (strain ATCC 35395 / DSM 2834 / JCM 12185 / C2A).